We begin with the raw amino-acid sequence, 405 residues long: DNA primase DnaG (405 aa).

Residues Asp172–Pro248 enclose the Toprim domain. Residues Glu178, Asp222, and Asp224 each coordinate Mg(2+). The disordered stretch occupies residues Ala279–Arg303. Low complexity predominate over residues Gln292 to Arg303.

It belongs to the archaeal DnaG primase family. Forms a ternary complex with MCM helicase and DNA. Component of the archaeal exosome complex. Requires Mg(2+) as cofactor.

It catalyses the reaction ssDNA + n NTP = ssDNA/pppN(pN)n-1 hybrid + (n-1) diphosphate.. Its function is as follows. RNA polymerase that catalyzes the synthesis of short RNA molecules used as primers for DNA polymerase during DNA replication. Also part of the exosome, which is a complex involved in RNA degradation. Acts as a poly(A)-binding protein that enhances the interaction between heteromeric, adenine-rich transcripts and the exosome. The protein is DNA primase DnaG of Pyrobaculum arsenaticum (strain DSM 13514 / JCM 11321 / PZ6).